The primary structure comprises 245 residues: MAASEHRCVGCGFRVKSLFIQYSPGNIRLMKCGNCKEVADEYIECERMIIFIDLILHRPKVYRHVLYNAINPATVNIQHLLWKLVFAYLLLDCYRSLLLRKSDEESSFSDSPVLLSIKVLIGVLSANAAFIISFAIATKGLLNEVSRRREIMLGIFISSYFKIFLLAMLVWEFPMSVIFFVDILLLTSNSMALKVMTESTMTRCIAVCLIAHLIRFLVGQIFEPTIFLIQIGSLLQYMSYFFRIV.

Transmembrane regions (helical) follow at residues 70–90 (INPATVNIQHLLWKLVFAYLL), 117–137 (IKVLIGVLSANAAFIISFAIA), 163–183 (IFLLAMLVWEFPMSVIFFVDI), 200–220 (TMTRCIAVCLIAHLIRFLVGQ), and 224–244 (PTIFLIQIGSLLQYMSYFFRI).

Belongs to the ARV1 family. In terms of tissue distribution, restricted to tissues in which cells are actively dividing or expanding. Mostly expressed in roots and flowers, and, to a lower extent, in stems and leaves.

It is found in the endoplasmic reticulum membrane. In terms of biological role, mediator of sterol homeostasis involved in sterol uptake, trafficking and distribution into membranes. Also regulates the sphingolipid metabolism. This Arabidopsis thaliana (Mouse-ear cress) protein is Protein ARV 1.